Consider the following 972-residue polypeptide: Peptidyl-glycine alpha-amidating monooxygenase (972 aa).

Residues 1–20 (MAGFRSLLVLLLVFPSGCVG) form the signal peptide. A peptidylglycine alpha-hydroxylating monooxygenase region spans residues 1 to 494 (MAGFRSLLVL…EGTWEPEHTG (494 aa)). Positions 21–30 (FRSPLSVFKR) are excised as a propeptide. At 31-873 (FKETTRSFSN…VPAVLITTLL (843 aa)) the chain is on the intragranular side. 5 disulfide bridges follow: Cys42-Cys181, Cys76-Cys121, Cys109-Cys126, Cys222-Cys329, and Cys288-Cys310. Residues His102 and His103 each contribute to the Cu(2+) site. Cu(2+)-binding residues include His167, His237, His239, and Met309. The tract at residues 495–817 (DFHVEEALDW…STEKMEHRSV (323 aa)) is peptidyl-alpha-hydroxyglycine alpha-amidating lyase. NHL repeat units lie at residues 498-541 (VEEA…NSFD), 567-608 (AAVL…LDPK), 617-662 (LGRS…FSPS), and 670-714 (GEAS…FKTD). Val517 is a Ca(2+) binding site. Residue Arg530 coordinates a protein. His582 contributes to the Zn(2+) binding site. Leu584 is a binding site for Ca(2+). A disulfide bond links Cys631 and Cys652. Residue Tyr651 participates in a protein binding. A Zn(2+)-binding site is contributed by His687. Residues Cys699 and Cys710 are joined by a disulfide bond. Residue Arg703 coordinates a protein. Asn762 is a glycosylation site (N-linked (GlcNAc...) asparagine). The stretch at 766–809 (GEIIDVFKPVRKHFDMPHDIAASEDGTVYVGDAHTNTVWKFTST) is one NHL 5 repeat. Residue His783 participates in Zn(2+) binding. Asp784 is a binding site for Ca(2+). The chain crosses the membrane as a helical span at residues 874 to 897 (VIPVVVLLAIALFIRWKKSRAFGD). Topologically, residues 898 to 972 (SERKLEASSG…APPPAPAPSS (75 aa)) are cytoplasmic. The interval 925-942 (NFFASRKGYSRKGFDRLS) is interaction with RASSF9. A phosphoserine mark is found at Ser929 and Ser942. Residues 937 to 972 (GFDRLSTEGSDQEKDEDASESEEEYSAPPPAPAPSS) are disordered. A Phosphothreonine modification is found at Thr943. Ser946 bears the Phosphoserine; by UHMK1 mark. Residues 949–961 (EKDEDASESEEEY) show a composition bias toward acidic residues. Ser957 is modified (phosphoserine). Residues 963-972 (APPPAPAPSS) show a composition bias toward pro residues.

It in the C-terminal section; belongs to the peptidyl-alpha-hydroxyglycine alpha-amidating lyase family. In the N-terminal section; belongs to the copper type II ascorbate-dependent monooxygenase family. In terms of assembly, monomer. Interacts with RASSF9. Zn(2+) is required as a cofactor. Requires Cu(2+) as cofactor.

The protein resides in the cytoplasmic vesicle. It is found in the secretory vesicle membrane. The catalysed reaction is a [peptide]-C-terminal glycine + 2 L-ascorbate + O2 = a [peptide]-C-terminal (2S)-2-hydroxyglycine + 2 monodehydro-L-ascorbate radical + H2O. It carries out the reaction a [peptide]-C-terminal (2S)-2-hydroxyglycine = a [peptide]-C-terminal amide + glyoxylate. The enzyme catalyses N-dodecanoylglycine + 2 L-ascorbate + O2 = N-dodecanoyl-(2S)-hydroxyglycine + 2 monodehydro-L-ascorbate radical + H2O. It catalyses the reaction N-dodecanoyl-(2S)-hydroxyglycine = dodecanamide + glyoxylate. The catalysed reaction is N-(9Z,12Z,15Z)-octadecatrienoylglycine + 2 L-ascorbate + O2 = N-(9Z,12Z,15Z)-octadecatrienoyl-(2S)-hydroxyglycine + 2 monodehydro-L-ascorbate radical + H2O. It carries out the reaction N-(9Z,12Z,15Z)-octadecatrienoyl-(2S)-hydroxyglycine = (9Z,12Z,15Z)-octadecatrienamide + glyoxylate. The enzyme catalyses N-(9Z-octadecenoyl)glycine + 2 L-ascorbate + O2 = N-(9Z-octadecenoyl)-(2S)-hydroxyglycine + 2 monodehydro-L-ascorbate radical + H2O. It catalyses the reaction N-(9Z-octadecenoyl)-(2S)-hydroxyglycine = (9Z)-octadecenamide + glyoxylate. The catalysed reaction is N-tetradecanoylglycine + 2 L-ascorbate + O2 = N-tetradecanoyl-(2S)-hydroxyglycine + 2 monodehydro-L-ascorbate radical + H2O. It carries out the reaction N-tetradecanoyl-(2S)-hydroxyglycine = tetradecamide + glyoxylate. The enzyme catalyses N-decanoylglycine + 2 L-ascorbate + O2 = N-decanoyl-(2S)-hydroxyglycine + 2 monodehydro-L-ascorbate radical + H2O. It catalyses the reaction N-decanoyl-(2S)-hydroxyglycine = decanamide + glyoxylate. The catalysed reaction is N-octanoylglycine + 2 L-ascorbate + O2 = N-octanoyl-(2S)-hydroxyglycine + 2 monodehydro-L-ascorbate radical + H2O. It carries out the reaction N-octanoyl-(2S)-hydroxyglycine = octanamide + glyoxylate. With respect to regulation, PAM activity is inhibited by EDTA, phenylglyoxal and diethyl pyrocarbonate. PAL activity is stimulated by cadmium and inhibited by mercury. Its function is as follows. Bifunctional enzyme that catalyzes amidation of the C-terminus of proteins. Alpha-amidation is present at the C-terminus of many endocrine hormones and neuropeptides and is required for their activity. C-terminal amidation also takes place in response to protein fragmentation triggered by oxidative stress, promoting degradation of amidated protein fragments by the proteasome. Alpha-amidation involves two sequential reactions, both of which are catalyzed by separate catalytic domains of the enzyme. The first step, catalyzed by peptidyl alpha-hydroxylating monooxygenase (PHM) domain, is the copper-, ascorbate-, and O2- dependent stereospecific hydroxylation (with S stereochemistry) at the alpha-carbon (C-alpha) of the C-terminal glycine of the peptidylglycine substrate. The second step, catalyzed by the peptidylglycine amidoglycolate lyase (PAL) domain, is the zinc-dependent cleavage of the N-C-alpha bond, producing the alpha-amidated peptide and glyoxylate. Similarly, catalyzes the two-step conversion of an N-fatty acylglycine to a primary fatty acid amide and glyoxylate. The chain is Peptidyl-glycine alpha-amidating monooxygenase (PAM) from Bos taurus (Bovine).